A 347-amino-acid chain; its full sequence is MKPPILIIIMSTVILGTMIVMTSSHWMLTWIGFEMNMLAIIPILMKKFNPRAMEASTKYFLTQATASMLLMMGIIINLLHSGQWTVSNNLNPTSSILMTTALAMKLGLAPFHFWVPEVTQGISLSSGMILLTWQKIAPLSVLYQISPTINPNLLLPMAILSVLIGGWGGLNQTQLRKIMAYSSITHMGWMTAILLYNPTMMFLNLIIYITMTLSTFMLFMINSATTTLSLSQTWNKAPLITSLILTLMLSLGGLPPLSGFIPKWMIIQELTKNEMIILPTFLAITALLNLYFYMRLTYTTALTMFPSTNNMKMKWQFENTKKMIFLPPLIITSTMLLPLTPMISILD.

Helical transmembrane passes span 3-23, 25-45, 59-79, 96-116, 122-142, 149-169, 178-198, 201-221, 237-257, 274-294, and 323-343; these read PPILIIIMSTVILGTMIVMTS, HWMLTWIGFEMNMLAIIPILM, YFLTQATASMLLMMGIIINLL, ILMTTALAMKLGLAPFHFWVP, ISLSSGMILLTWQKIAPLSVL, INPNLLLPMAILSVLIGGWGG, IMAYSSITHMGWMTAILLYNP, MFLNLIIYITMTLSTFMLFMI, APLITSLILTLMLSLGGLPPL, EMIILPTFLAITALLNLYFYM, and MIFLPPLIITSTMLLPLTPMI.

This sequence belongs to the complex I subunit 2 family. In terms of assembly, core subunit of respiratory chain NADH dehydrogenase (Complex I) which is composed of 45 different subunits. Interacts with TMEM242.

It localises to the mitochondrion inner membrane. It catalyses the reaction a ubiquinone + NADH + 5 H(+)(in) = a ubiquinol + NAD(+) + 4 H(+)(out). Core subunit of the mitochondrial membrane respiratory chain NADH dehydrogenase (Complex I) which catalyzes electron transfer from NADH through the respiratory chain, using ubiquinone as an electron acceptor. Essential for the catalytic activity and assembly of complex I. The sequence is that of NADH-ubiquinone oxidoreductase chain 2 from Civettictis civetta (African civet).